We begin with the raw amino-acid sequence, 1365 residues long: Serine/threonine-protein kinase LMTK1 (1365 aa).

A helical membrane pass occupies residues 32–52; sequence LAVVAVSFSGIFTVVILMLAC. The Protein kinase domain occupies 126–396; that stretch reads LLYLKEIGHG…PTAEEVHLLL (271 aa). ATP is bound by residues 132-140 and Lys157; that span reads IGHGWFGKV. Residue Asp254 is the Proton acceptor of the active site. Position 500 is a phosphoserine (Ser500). 5 disordered regions span residues 550–623, 638–698, 791–1186, 1237–1293, and 1343–1365; these read PDCA…LPAE, DDPL…GYVS, QEAE…PAVP, ESPT…EWDG, and ISDS…YTEA. The segment covering 560 to 575 has biased composition (polar residues); the sequence is QAVTDQDNNSEESTVA. Composition is skewed to low complexity over residues 638 to 655 and 675 to 686; these read DDPL…QPSP and SSNMSANNNSAS. Polar residues-rich tracts occupy residues 848-860 and 869-879; these read LESS…QEAP and EATSGVFTDLS. Composition is skewed to low complexity over residues 904–918 and 981–993; these read PDSL…SASD and PLLS…LSKK. Over residues 1015–1030 the composition is skewed to basic and acidic residues; that stretch reads PEKHSGIQDSQKEQDL. The residue at position 1035 (Ser1035) is a Phosphoserine. Polar residues predominate over residues 1037–1053; it reads GHQSVQAFPRSAVSSEV. Low complexity predominate over residues 1072 to 1083; it reads PLGAQGPVGVQP. Residues 1104 to 1132 are compositionally biased toward polar residues; sequence GSGTEPQGPSGQLSGRAQQGQMGNPSTPR. The span at 1150–1164 shows a compositional bias: acidic residues; it reads PEEDEDTEDSEESDE. Residue Thr1156 is modified to Phosphothreonine. Phosphoserine is present on residues Ser1159, Ser1162, Ser1175, Ser1178, and Ser1253. The span at 1354–1365 shows a compositional bias: gly residues; the sequence is PAAGAGGRYTEA.

The protein belongs to the protein kinase superfamily. Tyr protein kinase family. Interacts with CDK5. Post-translationally, autophosphorylated. Phosphorylated by CDK5. In terms of tissue distribution, expressed in brain, and, to a lower extent, in kidney, heart, lung and skeletal muscle. In the brain, expressed in the olfactory bulb, cerebellum, striatum, hippocampal formation, thalamus, hypothalamus, and pontine nuclei (at protein level).

The protein resides in the membrane. The protein localises to the cytoplasm. It localises to the perinuclear region. Its subcellular location is the cell projection. It is found in the dendrite. The protein resides in the axon. The protein localises to the growth cone. It carries out the reaction L-seryl-[protein] + ATP = O-phospho-L-seryl-[protein] + ADP + H(+). It catalyses the reaction L-threonyl-[protein] + ATP = O-phospho-L-threonyl-[protein] + ADP + H(+). Functionally, may be involved in neuronal differentiation. The protein is Serine/threonine-protein kinase LMTK1 (Aatk) of Mus musculus (Mouse).